Reading from the N-terminus, the 129-residue chain is Glycine cleavage system H protein (129 aa).

The Lipoyl-binding domain occupies 24–106 (SVVVGVTQHA…YGAGWIVEIE (83 aa)). Residue Lys65 is modified to N6-lipoyllysine.

It belongs to the GcvH family. In terms of assembly, the glycine cleavage system is composed of four proteins: P, T, L and H. (R)-lipoate serves as cofactor.

Functionally, the glycine cleavage system catalyzes the degradation of glycine. The H protein shuttles the methylamine group of glycine from the P protein to the T protein. This Myxococcus xanthus (strain DK1622) protein is Glycine cleavage system H protein.